Consider the following 201-residue polypeptide: Large ribosomal subunit protein uL18 (201 aa).

Belongs to the universal ribosomal protein uL18 family. In terms of assembly, part of the 50S ribosomal subunit. Contacts the 5S and 23S rRNAs.

Functionally, this is one of the proteins that bind and probably mediate the attachment of the 5S RNA into the large ribosomal subunit, where it forms part of the central protuberance. This is Large ribosomal subunit protein uL18 from Thermococcus onnurineus (strain NA1).